The following is a 421-amino-acid chain: Nacrein-like protein M (421 aa).

A glycan (N-linked (GlcNAc...) asparagine) is linked at asparagine 27. The region spanning 33-420 is the Alpha-carbonic anhydrase domain; sequence AGFSYDRSIC…KNKVTVYKSF (388 aa). The Zn(2+) site is built by histidine 132, histidine 134, and histidine 157. Residues 197-206 show a composition bias toward acidic residues; sequence DGFGDEPDDE. Positions 197 to 303 are disordered; sequence DGFGDEPDDE…GENGHKHGCR (107 aa). Basic and acidic residues predominate over residues 207 to 219; that stretch reads ECKRILKGHHPDN. The span at 220-295 shows a compositional bias: low complexity; the sequence is NENGNGDNGN…NNGDNGNNGE (76 aa). 24 consecutive repeat copies span residues 225–227, 228–230, 231–233, 234–236, 237–239, 240–242, 243–245, 246–248, 249–251, 252–254, 255–257, 258–260, 261–263, 264–266, 267–269, 270–272, 273–275, 276–278, 279–281, 282–284, 285–287, 288–290, 291–292, and 294–296. The tract at residues 225-296 is 24 X 3 AA approximate tandem repeats of G-X-N; it reads GDNGNNGYNG…NGDNGNNGEN (72 aa). 361 to 362 contributes to the substrate binding site; it reads TT.

This sequence belongs to the alpha-carbonic anhydrase family. Homooligomer; disulfide-linked. May also be disulfide-linked to insoluble organic matrix. Zn(2+) is required as a cofactor. In terms of tissue distribution, expressed in the mantle.

Its subcellular location is the secreted. The protein resides in the extracellular space. It is found in the extracellular matrix. It catalyses the reaction hydrogencarbonate + H(+) = CO2 + H2O. Acts as a negative regulator for calcification in the shells of mollusks. May function both as a calcium concentrator and as a carbonic anhydrase required for production of carbonate ions, which are assembled to CaCO(3) at mineralization sites. Is important for shell formation in both the calcitic prismatic layer and the aragonitic nacreous layerr. Shows inhibitory activity of crystal formation when present in free state but, when attached to the insoluble matrix, may regulate the form and size of aragonite crystal. This is Nacrein-like protein M from Pinctada maxima (Silver-lipped pearl oyster).